Reading from the N-terminus, the 390-residue chain is Sister chromatid cohesion protein DCC1 (390 aa).

It belongs to the DCC1 family. Component of the ctf18-RFC complex which consists of ctf18, ctf8, dscc1 and the RFC complex.

Its subcellular location is the nucleus. In terms of biological role, loads pcna onto primed templates regulating velocity, spacing and restart activity of replication forks. May couple DNA replication to sister chromatid cohesion. The chain is Sister chromatid cohesion protein DCC1 (dscc1) from Xenopus laevis (African clawed frog).